The sequence spans 217 residues: HTH-type transcriptional regulator EthR (217 aa).

Residues 1-22 (MTTASQTRTPRGRRSARPSGDD) form a disordered region. An HTH tetR-type domain is found at 21–81 (DDREAAILAT…SLIDPLIKRA (61 aa)). Residues 44–63 (SVDDLAKGAGISRPTFYFYF) constitute a DNA-binding region (H-T-H motif).

As to quaternary structure, homodimer.

In terms of biological role, involved in the repression of teh monooxygenase EthA which is responsible of the formation of the active metabolite of ethionamide (ETH). The chain is HTH-type transcriptional regulator EthR (ethR) from Mycolicibacterium smegmatis (strain ATCC 700084 / mc(2)155) (Mycobacterium smegmatis).